We begin with the raw amino-acid sequence, 721 residues long: Mitogen-activated protein kinase 6 (721 aa).

The region spanning 20–316 (YMDLKPLGCG…AEEALSHPYM (297 aa)) is the Protein kinase domain. ATP is bound by residues 26–34 (LGCGGNGLV) and Lys49. Asp152 serves as the catalytic Proton acceptor. A Phosphothreonine modification is found at Thr626. Positions 626–628 (TSY) match the TXY motif. Residue Tyr628 is modified to Phosphotyrosine.

It belongs to the protein kinase superfamily. CMGC Ser/Thr protein kinase family. MAP kinase subfamily. It depends on Mg(2+) as a cofactor. Dually phosphorylated on Thr-626 and Tyr-628, which activates the enzyme.

The catalysed reaction is L-seryl-[protein] + ATP = O-phospho-L-seryl-[protein] + ADP + H(+). It carries out the reaction L-threonyl-[protein] + ATP = O-phospho-L-threonyl-[protein] + ADP + H(+). With respect to regulation, activated by threonine and tyrosine phosphorylation. Functionally, phosphorylates microtubule-associated protein 2 (MAP2). May promote entry in the cell cycle. The polypeptide is Mitogen-activated protein kinase 6 (MAPK6) (Gallus gallus (Chicken)).